The primary structure comprises 935 residues: GPI ethanolamine phosphate transferase 1 (935 aa).

The Cytoplasmic portion of the chain corresponds to 1–5 (MFGRL). A helical transmembrane segment spans residues 6-26 (LLLGILFHVVFLKSIFDIYFV). Over 27 to 449 (TPLIHGMKQY…LQRYDWLLLR (423 aa)) the chain is Lumenal. Residues Asn-86, Asn-134, Asn-315, and Asn-398 are each glycosylated (N-linked (GlcNAc...) asparagine). The chain crosses the membrane as a helical span at residues 450-470 (SIVFFGYLSWIGYVICFVFSL). Topologically, residues 471 to 483 (NIEPSSKIVKPVS) are cytoplasmic. A helical membrane pass occupies residues 484–503 (VVKRVAFNIPFLLICIFFYI). Over 504-509 (QSSPPF) the chain is Lumenal. Residues 510–530 (YYGYALFPTIFLQLIHSIFPN) form a helical membrane-spanning segment. The Cytoplasmic portion of the chain corresponds to 531-547 (TKLGFKNFLTVAKQKHG). The chain crosses the membrane as a helical span at residues 548-568 (FSLLKILFISLCILCLLQFIV). The Lumenal segment spans residues 569 to 576 (YSYFHREG). A helical transmembrane segment spans residues 577–597 (FSVILMGLAAWPWLLHADYAF). The Cytoplasmic portion of the chain corresponds to 598–600 (SHK). The helical transmembrane segment at 601 to 621 (TISVSWSVLTSLLCFFTILPV) threads the bilayer. At 622 to 626 (NKKES) the chain is on the lumenal side. The chain crosses the membrane as a helical span at residues 627 to 647 (LLFIFAGGFAMSVAGVFYILY). Residues 648–663 (RRNQAFQYSSTVTNKQ) lie on the Cytoplasmic side of the membrane. A helical transmembrane segment spans residues 664 to 684 (LVLQVLIIMATVPVTLKIADS). Residues 685–688 (LQRN) lie on the Lumenal side of the membrane. The chain crosses the membrane as a helical span at residues 689 to 709 (IAIPPILRLVAFGLFITSYII). Residues 710-737 (PSHHIRSCKHYFLDRLAILFLTFSPTMC) lie on the Cytoplasmic side of the membrane. Residues 738–758 (MLSISFEALFYVVLFITLGLW) form a helical membrane-spanning segment. Residues 759–792 (MELETELQKYTEQLHPEYSRKKDAKFHLSLSHIR) are Lumenal-facing. The chain crosses the membrane as a helical span at residues 793–813 (ISLFFYIFINVAFFGTGNVAS). The Cytoplasmic portion of the chain corresponds to 814-835 (LSTFALDSVKRFIPVFNPVTQG). A helical transmembrane segment spans residues 836 to 856 (ALLMYTILVPFIALSAAFGIM). At 857-865 (NKRLGGIQQ) the chain is on the lumenal side. A helical transmembrane segment spans residues 866 to 886 (VTFFLAVGMADIVTINFFYLV). The Cytoplasmic segment spans residues 887-894 (KDEGSWKD). The helical transmembrane segment at 895 to 915 (IGVSISHFCISNFLILFITAL) threads the bilayer. Residues 916 to 935 (EHASAILCKNITYTIHEKVN) lie on the Lumenal side of the membrane. N-linked (GlcNAc...) asparagine glycosylation occurs at Asn-925.

The protein belongs to the PIGG/PIGN/PIGO family. PIGN subfamily.

Its subcellular location is the endoplasmic reticulum membrane. It participates in glycolipid biosynthesis; glycosylphosphatidylinositol-anchor biosynthesis. Functionally, ethanolamine phosphate transferase involved in glycosylphosphatidylinositol-anchor biosynthesis. Transfers ethanolamine phosphate to the first alpha-1,4-linked mannose of the glycosylphosphatidylinositol precursor of GPI-anchor. The chain is GPI ethanolamine phosphate transferase 1 (its8) from Schizosaccharomyces pombe (strain 972 / ATCC 24843) (Fission yeast).